A 241-amino-acid polypeptide reads, in one-letter code: Carboxy-S-adenosyl-L-methionine synthase (241 aa).

S-adenosyl-L-methionine-binding positions include tyrosine 38, 63–65 (GCS), 88–89 (DN), 116–117 (DI), asparagine 131, and arginine 198.

This sequence belongs to the class I-like SAM-binding methyltransferase superfamily. Cx-SAM synthase family. In terms of assembly, homodimer.

The enzyme catalyses prephenate + S-adenosyl-L-methionine = carboxy-S-adenosyl-L-methionine + 3-phenylpyruvate + H2O. Catalyzes the conversion of S-adenosyl-L-methionine (SAM) to carboxy-S-adenosyl-L-methionine (Cx-SAM). The sequence is that of Carboxy-S-adenosyl-L-methionine synthase from Haemophilus influenzae (strain PittGG).